We begin with the raw amino-acid sequence, 95 residues long: Histone-like DNA-binding protein (95 aa).

Belongs to the bacterial histone-like protein family.

This is Histone-like DNA-binding protein from Rickettsia montanensis.